Here is a 606-residue protein sequence, read N- to C-terminus: Zinc metalloproteinase-disintegrin-like HF3 (606 aa).

An N-terminal signal peptide occupies residues 1-20 (MIQVLLVTICLAAFPYQGSS). Positions 21–190 (IILESGNVND…KKASQLVVTA (170 aa)) are excised as a propeptide. The region spanning 199 to 395 (KYIELVILAD…YKPQCILNEP (197 aa)) is the Peptidase M12B domain. E202 provides a ligand contact to Ca(2+). N259 is a glycosylation site (N-linked (GlcNAc...) asparagine). D286 contributes to the Ca(2+) binding site. Disulfide bonds link C310–C390, C350–C374, and C352–C357. A glycan (N-linked (GlcNAc...) asparagine) is linked at N313. H335 contacts Zn(2+). E336 is a catalytic residue. Residues H339 and H345 each coordinate Zn(2+). N373 carries an N-linked (GlcNAc...) asparagine glycan. C390, N393, V405, N408, L410, E412, E415, and D418 together coordinate Ca(2+). The Disintegrin domain maps to 403–489 (PPVCGNELLE…DCPTDDFKRN (87 aa)). 14 disulfides stabilise this stretch: C406–C435, C417–C430, C419–C425, C429–C452, C443–C449, C448–C474, C461–C481, C468–C500, C493–C505, C512–C562, C527–C569, C540–C550, C557–C594, and C588–C599. Residues 467–469 (ECD) carry the D/ECD-tripeptide motif. D469, E472, and D484 together coordinate Ca(2+). An N-linked (GlcNAc...) asparagine glycan is attached at N519. N-linked (GlcNAc...) asparagine glycosylation is present at N584.

Belongs to the venom metalloproteinase (M12B) family. P-III subfamily. P-IIIa sub-subfamily. As to quaternary structure, monomer. Zn(2+) serves as cofactor. In terms of tissue distribution, expressed by the venom gland.

Its subcellular location is the secreted. Functionally, the metalloproteinase-disintegrin-like HF3 is a potent hemorrhagic toxin that activates macrophages for phagocytosis through integrin alpha-M/beta-2 (ITGAM/ITGB2). It inhibits collagen-induced platelet aggregation. This protein shows cleavage specificity for substrate for leucine at P1' position, followed by hydrophobic residues in P2'. This is Zinc metalloproteinase-disintegrin-like HF3 from Bothrops jararaca (Jararaca).